Reading from the N-terminus, the 73-residue chain is MANSRNKSSNELAVHGAQQAIDQMKYEIASEFGVTLGPDTTARANGSVGGEITKRLVQMAEQQLGGGRSKSLS.

The protein belongs to the alpha/beta-type SASP family.

Functionally, SASP are bound to spore DNA. They are double-stranded DNA-binding proteins that cause DNA to change to an a-like conformation. They protect the DNA backbone from chemical and enzymatic cleavage and are thus involved in dormant spore's high resistance to UV light. The polypeptide is Small, acid-soluble spore protein C5 (SASP-C5) (Priestia megaterium (Bacillus megaterium)).